We begin with the raw amino-acid sequence, 337 residues long: Anthranilate phosphoribosyltransferase (337 aa).

5-phospho-alpha-D-ribose 1-diphosphate contacts are provided by residues Gly-80, 83 to 84, Thr-88, 90 to 93, 108 to 116, and Ser-120; these read GD, NIST, and KHGNRAVSS. Residue Gly-80 participates in anthranilate binding. Ser-92 serves as a coordination point for Mg(2+). Asn-111 lines the anthranilate pocket. Arg-166 contacts anthranilate. Residues Asp-224 and Glu-225 each coordinate Mg(2+).

Belongs to the anthranilate phosphoribosyltransferase family. Homodimer. The cofactor is Mg(2+).

It carries out the reaction N-(5-phospho-beta-D-ribosyl)anthranilate + diphosphate = 5-phospho-alpha-D-ribose 1-diphosphate + anthranilate. It functions in the pathway amino-acid biosynthesis; L-tryptophan biosynthesis; L-tryptophan from chorismate: step 2/5. Its function is as follows. Catalyzes the transfer of the phosphoribosyl group of 5-phosphorylribose-1-pyrophosphate (PRPP) to anthranilate to yield N-(5'-phosphoribosyl)-anthranilate (PRA). The chain is Anthranilate phosphoribosyltransferase from Anaeromyxobacter sp. (strain Fw109-5).